Consider the following 406-residue polypeptide: Corticosteroid-binding globulin (406 aa).

Positions 1–22 are cleaved as a signal peptide; sequence MPLLLYTCLLWLLSSGLWTVQA. N-linked (GlcNAc...) asparagine glycans are attached at residues Asn31 and Asn96. Gln255 lines the cortisol pocket. Asn261 carries N-linked (GlcNAc...) asparagine glycosylation. Asp287 is a binding site for cortisol. N-linked (GlcNAc...) asparagine glycosylation is found at Asn331 and Asn360. Trp394 is a binding site for cortisol.

It belongs to the serpin family. As to expression, expressed by the liver; secreted in plasma.

Its subcellular location is the secreted. Functionally, major transport protein for glucocorticoids and progestins in the blood of almost all vertebrate species. The chain is Corticosteroid-binding globulin (SERPINA6) from Saimiri sciureus (Common squirrel monkey).